We begin with the raw amino-acid sequence, 227 residues long: Lipoprotein-releasing system ATP-binding protein LolD (227 aa).

Positions 6-227 constitute an ABC transporter domain; the sequence is LKCENINKFY…MQDGLLKEGA (222 aa). 42-49 contacts ATP; the sequence is GSSGSGKS.

Belongs to the ABC transporter superfamily. Lipoprotein translocase (TC 3.A.1.125) family. In terms of assembly, the complex is composed of two ATP-binding proteins (LolD) and two transmembrane proteins (LolC and LolE).

It localises to the cell inner membrane. Functionally, part of the ABC transporter complex LolCDE involved in the translocation of mature outer membrane-directed lipoproteins, from the inner membrane to the periplasmic chaperone, LolA. Responsible for the formation of the LolA-lipoprotein complex in an ATP-dependent manner. This Haemophilus influenzae (strain 86-028NP) protein is Lipoprotein-releasing system ATP-binding protein LolD.